A 528-amino-acid polypeptide reads, in one-letter code: DNA damage-binding protein cmr1 (528 aa).

Disordered stretches follow at residues 32 to 98 (AQSS…QYEA) and 217 to 243 (DASQ…DPDP). The segment covering 52–62 (KPKKKPPPKKV) has biased composition (basic residues). One copy of the WD 1 repeat lies at 185 to 226 (LTPERIYTMTFHPSEAKPLIFAGDKMGNLGVLDASQEKPTSA). A compositionally biased stretch (acidic residues) spans 230–242 (EDDEEDAEDDDPD). WD repeat units follow at residues 250-290 (PHTR…SVEK), 297-337 (SDDI…RSAV), 342-382 (LSEK…HDDP), 389-428 (VSRL…AAWE), 451-494 (GRWV…LAQL), and 497-528 (DGIT…CLWM).

This sequence belongs to the WD repeat DDB2/WDR76 family.

In terms of biological role, DNA-binding protein that binds to both single- and double-stranded DNA. Binds preferentially to UV-damaged DNA. May be involved in DNA-metabolic processes. The polypeptide is DNA damage-binding protein cmr1 (Aspergillus fumigatus (strain CBS 144.89 / FGSC A1163 / CEA10) (Neosartorya fumigata)).